The chain runs to 483 residues: Regulatory protein ViaA (483 aa).

Belongs to the ViaA family. In terms of assembly, homodimer. Interacts with RavA.

It is found in the cytoplasm. Functionally, component of the RavA-ViaA chaperone complex, which may act on the membrane to optimize the function of some of the respiratory chains. ViaA stimulates the ATPase activity of RavA. This is Regulatory protein ViaA from Shigella flexneri.